Consider the following 281-residue polypeptide: Undecaprenyl-diphosphatase (281 aa).

8 helical membrane passes run 4–24, 45–65, 89–109, 113–133, 152–172, 190–210, 225–245, and 257–277; these read IEIL…WLPI, AFMS…VMVI, WLKV…DDWF, FHNM…FIYL, LPYT…LPGT, SVVT…ASAL, GQLF…MVAI, and FTLF…YSFV.

Belongs to the UppP family.

Its subcellular location is the cell membrane. The enzyme catalyses di-trans,octa-cis-undecaprenyl diphosphate + H2O = di-trans,octa-cis-undecaprenyl phosphate + phosphate + H(+). Functionally, catalyzes the dephosphorylation of undecaprenyl diphosphate (UPP). Confers resistance to bacitracin. The sequence is that of Undecaprenyl-diphosphatase from Streptococcus pneumoniae (strain Hungary19A-6).